A 206-amino-acid polypeptide reads, in one-letter code: MGSRPRGALSLLLLLLALLSRPASGCPAPCSCAGTLVDCGRRGLTWASLPAAFPPDTTELVLTGNNLTALPPGLLDALPALRAAHLGANPWRCDCRLLPLRAWLAGRPERAPYRDLRCVAPPALRGRLLPYVAEDELRAACAPGLLCWGALVAQLALLVLGLLHALLLALLLGRLRRLRARARARSIQEFSLTAPLVAESARGGAS.

Residues 1–26 form the signal peptide; it reads MGSRPRGALSLLLLLLALLSRPASGC. Disulfide bonds link cysteine 26/cysteine 32 and cysteine 30/cysteine 39. The 29-residue stretch at 27-55 folds into the LRRNT domain; the sequence is PAPCSCAGTLVDCGRRGLTWASLPAAFPP. The Extracellular segment spans residues 27–147; sequence PAPCSCAGTL…RAACAPGLLC (121 aa). An LRR repeat occupies 60–83; the sequence is LVLTGNNLTALPPGLLDALPALRA. Asparagine 66 carries an N-linked (GlcNAc...) asparagine glycan. In terms of domain architecture, LRRCT spans 89–143; that stretch reads NPWRCDCRLLPLRAWLAGRPERAPYRDLRCVAPPALRGRLLPYVAEDELRAACAP. Intrachain disulfides connect cysteine 93/cysteine 118 and cysteine 95/cysteine 141. The helical transmembrane segment at 148–172 threads the bilayer; the sequence is WGALVAQLALLVLGLLHALLLALLL. Residues 173–206 are Cytoplasmic-facing; the sequence is GRLRRLRARARARSIQEFSLTAPLVAESARGGAS. Serine 186 and serine 191 each carry phosphoserine. Threonine 193 carries the post-translational modification Phosphothreonine. Residue serine 200 is modified to Phosphoserine.

In terms of assembly, two GP-Ib beta are disulfide-linked to one GP-Ib alpha. GP-IX is complexed with the GP-Ib heterodimer via a non covalent linkage. Interacts with TRAF4.

It localises to the membrane. Gp-Ib, a surface membrane protein of platelets, participates in the formation of platelet plugs by binding to von Willebrand factor, which is already bound to the subendothelium. This chain is Platelet glycoprotein Ib beta chain (Gp1bb), found in Mus musculus (Mouse).